The chain runs to 596 residues: Germinal center kinase 3 (596 aa).

Over residues 1-54 (MSSSNLAGNTNTTTTSSAASAAAAHSAANASTITSEYSTTQTTTGTFNTDTLSS) the composition is skewed to low complexity. The interval 1–80 (MSSSNLAGNT…PPPPPQVSSP (80 aa)) is disordered. Phosphothreonine; by autocatalysis is present on residues Thr13 and Thr32. Residues 67 to 77 (SQPPPPPPPQV) are compositionally biased toward pro residues. One can recognise a Protein kinase domain in the interval 108 to 386 (YKLDESIGVG…ASELLKYSFF (279 aa)). Residues 114–122 (IGVGATATV) and Lys137 each bind ATP. Ser190 is modified (phosphoserine; by autocatalysis). Residue Asp240 is the Proton acceptor of the active site. The residue at position 280 (Thr280) is a Phosphothreonine. Ser405 carries the post-translational modification Phosphoserine; by autocatalysis. At Ser419 the chain carries Phosphoserine. The disordered stretch occupies residues 429-496 (NWEFEYDSPQ…EGGGATTPCP (68 aa)). Positions 432–450 (FEYDSPQESDDDSDLEDEE) are enriched in acidic residues. Residues 466-479 (GAAGAAGGATGGAA) are compositionally biased toward gly residues.

The protein belongs to the protein kinase superfamily. STE Ser/Thr protein kinase family. STE20 subfamily. Interacts (via C-terminus) with clh-3; required for the phosphorylation-mediated inhibition of clh-3 function. Interacts (via C-terminus) with wnk-1; the interaction is direct. Phosphorylated at Thr-280 and Ser-419 probably by wnk-1; phosphorylation results in weak activation. Predominantly autophosphorylated at Thr-32 and Ser-190 and weakly autophosphorylated at Thr-13 and Ser-405 in vitro. Ubiquitously expressed with a higher expression in the excretory cell. Expressed in both male and female germ cells; up-regulated in maturing spermatocytes but absent in mature sperm.

It localises to the cytoplasm. The protein resides in the nucleus. It carries out the reaction L-seryl-[protein] + ATP = O-phospho-L-seryl-[protein] + ADP + H(+). The catalysed reaction is L-threonyl-[protein] + ATP = O-phospho-L-threonyl-[protein] + ADP + H(+). Plays a role in osmotic stress responses by regulating ion homeostasis and by controlling cell volume via the phosphorylation-mediated inhibition of the chloride channel clh-3. In addition, increases gpdh-1 translation upon osmotic stress, likely downstream of wnk-1. Involved in several developmental processes including the tubular formation of the excretory canals, the formation of the intestine and the progression through larval stages. In addition, required for germ line development by controlling meiosis and chromosomal segregation during spermatogenesis. By controlling clh-3 activity, may regulate the development of the excretory canals and fertility. The chain is Germinal center kinase 3 from Caenorhabditis elegans.